The chain runs to 194 residues: Imidazoleglycerol-phosphate dehydratase (194 aa).

This sequence belongs to the imidazoleglycerol-phosphate dehydratase family.

The protein resides in the cytoplasm. The enzyme catalyses D-erythro-1-(imidazol-4-yl)glycerol 3-phosphate = 3-(imidazol-4-yl)-2-oxopropyl phosphate + H2O. The protein operates within amino-acid biosynthesis; L-histidine biosynthesis; L-histidine from 5-phospho-alpha-D-ribose 1-diphosphate: step 6/9. This chain is Imidazoleglycerol-phosphate dehydratase, found in Listeria monocytogenes serotype 4b (strain F2365).